A 68-amino-acid chain; its full sequence is Large ribosomal subunit protein uL29 (68 aa).

The protein belongs to the universal ribosomal protein uL29 family.

This is Large ribosomal subunit protein uL29 from Limosilactobacillus fermentum (strain NBRC 3956 / LMG 18251) (Lactobacillus fermentum).